The sequence spans 496 residues: ATP synthase subunit beta (496 aa).

An ATP-binding site is contributed by 155–162 (GGAGVGKT).

Belongs to the ATPase alpha/beta chains family. In terms of assembly, F-type ATPases have 2 components, CF(1) - the catalytic core - and CF(0) - the membrane proton channel. CF(1) has five subunits: alpha(3), beta(3), gamma(1), delta(1), epsilon(1). CF(0) has three main subunits: a(1), b(2) and c(9-12). The alpha and beta chains form an alternating ring which encloses part of the gamma chain. CF(1) is attached to CF(0) by a central stalk formed by the gamma and epsilon chains, while a peripheral stalk is formed by the delta and b chains.

The protein resides in the cell membrane. It carries out the reaction ATP + H2O + 4 H(+)(in) = ADP + phosphate + 5 H(+)(out). Produces ATP from ADP in the presence of a proton gradient across the membrane. The catalytic sites are hosted primarily by the beta subunits. The protein is ATP synthase subunit beta of Karelsulcia muelleri (strain GWSS) (Sulcia muelleri).